The sequence spans 117 residues: uncharacterized protein (117 aa).

Residues 57–77 form a helical membrane-spanning segment; it reads LGFPLGLLVFLHSLIVARFFV.

It is found in the membrane. This is an uncharacterized protein from Schizosaccharomyces pombe (strain 972 / ATCC 24843) (Fission yeast).